We begin with the raw amino-acid sequence, 123 residues long: UPF0102 protein DR_2282 (123 aa).

Belongs to the UPF0102 family.

The protein is UPF0102 protein DR_2282 of Deinococcus radiodurans (strain ATCC 13939 / DSM 20539 / JCM 16871 / CCUG 27074 / LMG 4051 / NBRC 15346 / NCIMB 9279 / VKM B-1422 / R1).